A 164-amino-acid polypeptide reads, in one-letter code: UPF0178 protein RPB_3201 (164 aa).

Belongs to the UPF0178 family.

The polypeptide is UPF0178 protein RPB_3201 (Rhodopseudomonas palustris (strain HaA2)).